Reading from the N-terminus, the 37-residue chain is uncharacterized protein (37 aa).

The chain crosses the membrane as a helical span at residues 16–36; that stretch reads FALIVVLFILLIIVGTAFVGG.

Belongs to the SscA family.

It is found in the membrane. This is an uncharacterized protein from Bacillus subtilis (strain 168).